Consider the following 482-residue polypeptide: Cilia- and flagella-associated protein 53 (482 aa).

Coiled coils occupy residues 9-40, 67-124, and 152-413; these read DARI…AVAE, ADLN…QALA, and IEER…AKDA. The interval 462–482 is disordered; it reads VNQTLSSTDPPVWHGRRKFDW.

Belongs to the CFAP53 family.

Its subcellular location is the cell projection. It is found in the cilium. It localises to the flagellum. Functionally, may play a role in filopodium movement. This chain is Cilia- and flagella-associated protein 53, found in Chlamydomonas reinhardtii (Chlamydomonas smithii).